The sequence spans 1436 residues: DNA polymerase III PolC-type (1436 aa).

The Exonuclease domain maps to Tyr420–Phe576.

It belongs to the DNA polymerase type-C family. PolC subfamily.

It localises to the cytoplasm. It catalyses the reaction DNA(n) + a 2'-deoxyribonucleoside 5'-triphosphate = DNA(n+1) + diphosphate. Its function is as follows. Required for replicative DNA synthesis. This DNA polymerase also exhibits 3' to 5' exonuclease activity. The sequence is that of DNA polymerase III PolC-type from Staphylococcus aureus (strain MW2).